Here is a 74-residue protein sequence, read N- to C-terminus: Peptide BmKa2 (74 aa).

The signal sequence occupies residues 1-24 (MSSKTLLVLLLVGVLVSTFFTADA).

The protein belongs to the non-disulfide-bridged peptide (NDBP) superfamily. Long chain multifunctional peptide (group 2) family. In terms of tissue distribution, expressed by the venom gland.

Its subcellular location is the secreted. Its function is as follows. Highly acidic peptide that may have antibacterial activity. The chain is Peptide BmKa2 from Olivierus martensii (Manchurian scorpion).